A 528-amino-acid polypeptide reads, in one-letter code: ATP synthase subunit alpha 1 (528 aa).

Position 177–184 (Gly177–Thr184) interacts with ATP.

The protein belongs to the ATPase alpha/beta chains family. F-type ATPases have 2 components, CF(1) - the catalytic core - and CF(0) - the membrane proton channel. CF(1) has five subunits: alpha(3), beta(3), gamma(1), delta(1), epsilon(1). CF(0) has three main subunits: a(1), b(2) and c(9-12). The alpha and beta chains form an alternating ring which encloses part of the gamma chain. CF(1) is attached to CF(0) by a central stalk formed by the gamma and epsilon chains, while a peripheral stalk is formed by the delta and b chains.

The protein resides in the cell inner membrane. It carries out the reaction ATP + H2O + 4 H(+)(in) = ADP + phosphate + 5 H(+)(out). In terms of biological role, produces ATP from ADP in the presence of a proton gradient across the membrane. The alpha chain is a regulatory subunit. The chain is ATP synthase subunit alpha 1 from Pseudoalteromonas atlantica (strain T6c / ATCC BAA-1087).